The sequence spans 405 residues: Cysteine desulfurase IscS (405 aa).

Asn-156 serves as a coordination point for pyridoxal 5'-phosphate. Residue Lys-207 is modified to N6-(pyridoxal phosphate)lysine. Cys-329 (cysteine persulfide intermediate) is an active-site residue. Cys-329 provides a ligand contact to [2Fe-2S] cluster.

The protein belongs to the class-V pyridoxal-phosphate-dependent aminotransferase family. NifS/IscS subfamily. As to quaternary structure, homodimer. Forms a heterotetramer with IscU, interacts with other sulfur acceptors. Requires pyridoxal 5'-phosphate as cofactor.

Its subcellular location is the cytoplasm. The enzyme catalyses (sulfur carrier)-H + L-cysteine = (sulfur carrier)-SH + L-alanine. It functions in the pathway cofactor biosynthesis; iron-sulfur cluster biosynthesis. In terms of biological role, master enzyme that delivers sulfur to a number of partners involved in Fe-S cluster assembly, tRNA modification or cofactor biosynthesis. Catalyzes the removal of elemental sulfur atoms from cysteine to produce alanine. Functions as a sulfur delivery protein for Fe-S cluster synthesis onto IscU, an Fe-S scaffold assembly protein, as well as other S acceptor proteins. In Dechloromonas aromatica (strain RCB), this protein is Cysteine desulfurase IscS.